The following is a 1675-amino-acid chain: Clathrin heavy chain 1 (1675 aa).

Ala-2 bears the N-acetylalanine mark. The segment at 2-479 is globular terminal domain; the sequence is AQILPIRFQE…VDPTLALSVY (478 aa). WD40-like repeat stretches follow at residues 24-67, 68-107, 108-149, 150-195, 196-257, 258-301, and 302-330; these read NIGF…RPIS, ADSA…MTDD, VTFW…SSLA, GCQI…QPIE, GHAA…PEAQ, NDFP…ISGE, and TIFV…VCVE. Ser-67 bears the Phosphoserine mark. The residue at position 105 (Thr-105) is a Phosphothreonine. The residue at position 184 (Tyr-184) is a Phosphotyrosine. A Phosphothreonine modification is found at Thr-394. Positions 449 to 465 are binding site for the uncoating ATPase, involved in lattice disassembly; it reads EKWLKEDKLECSEELGD. Residues 480–523 form a flexible linker region; sequence LRANVPNKVIQCFAETGQVQKIVLYAKKVGYTPDWIFLLRNVMR. The distal segment stretch occupies residues 524–634; the sequence is ISPDQGQQFA…RALEHFTDLY (111 aa). A heavy chain arm region spans residues 524–1675; sequence ISPDQGQQFA…QPQPGFGYSM (1152 aa). 7 CHCR repeats span residues 537-683, 686-828, 833-972, 979-1124, 1128-1269, 1274-1420, and 1423-1566; these read VQDE…QIWV, ASKY…SEDV, ILVV…PLID, LSET…VKEA, YIKA…FRLA, LHIV…LLLN, and LMVL…RECF. Tyr-634 carries the post-translational modification Phosphotyrosine. Residues 639–1675 are proximal segment; sequence AVVHTHLLNP…QPQPGFGYSM (1037 aa). At Lys-737 the chain carries N6-succinyllysine. Lys-856 bears the N6-acetyllysine mark. At Tyr-899 the chain carries Phosphotyrosine. Ser-1167 carries the post-translational modification Phosphoserine. Residue Tyr-1206 is modified to Phosphotyrosine. The segment at 1213 to 1522 is involved in binding clathrin light chain; sequence AAKLLYNNVS…YLFKGNNRWK (310 aa). Ser-1229 is subject to Phosphoserine. Lys-1441 is subject to N6-acetyllysine; alternate. Position 1441 is an N6-succinyllysine; alternate (Lys-1441). Tyr-1477 and Tyr-1487 each carry phosphotyrosine. The residue at position 1494 (Ser-1494) is a Phosphoserine. Lys-1501 bears the N6-acetyllysine mark. The segment at 1550–1675 is trimerization; it reads AEELLQWFLQ…QPQPGFGYSM (126 aa).

This sequence belongs to the clathrin heavy chain family. In terms of assembly, clathrin triskelions, composed of 3 heavy chains and 3 light chains, are the basic subunits of the clathrin coat. In the presence of light chains, hub assembly is influenced by both the pH and the concentration of calcium. Interacts with HIP1. Interacts with DENND1A, DENND1B and DENND1C. Interacts with OCRL. Interacts with ERBB2. Interacts with FKBP6. Interacts with CKAP5 and TACC3 forming the TACC3/ch-TOG/clathrin complex located at spindle inter-microtubules bridges; the complex implicates clathrin triskelions; TACC3 and CLTC are proposed to form a composite microtubule interaction surface. Interacts with ATG16L1 (via N-terminus). Interacts with RFTN1; the interaction occurs in response to pathogens. Interacts with USP2 isoform 2. Interacts with TMEM106B (via N-terminus). Interacts with DNAJC6; this interaction produces a local change in heavy-chain contacts, creating a detectable global distortion of the clathrin coat and leads to the recruitment of HSPA8.

It is found in the cytoplasmic vesicle membrane. Its subcellular location is the membrane. The protein localises to the coated pit. The protein resides in the melanosome. It localises to the cytoplasm. It is found in the cytoskeleton. Its subcellular location is the spindle. In terms of biological role, clathrin is the major protein of the polyhedral coat of coated pits and vesicles. Two different adapter protein complexes link the clathrin lattice either to the plasma membrane or to the trans-Golgi network. Acts as a component of the TACC3/ch-TOG/clathrin complex proposed to contribute to stabilization of kinetochore fibers of the mitotic spindle by acting as inter-microtubule bridge. The TACC3/ch-TOG/clathrin complex is required for the maintenance of kinetochore fiber tension. Plays a role in early autophagosome formation. Interaction with DNAJC6 mediates the recruitment of HSPA8 to the clathrin lattice and creates local destabilization of the lattice promoting uncoating. The chain is Clathrin heavy chain 1 from Rattus norvegicus (Rat).